A 635-amino-acid chain; its full sequence is Chaperone protein DnaK (635 aa).

Threonine 200 carries the phosphothreonine; by autocatalysis modification. The segment at 595 to 635 (KAQPLTEKVQAKSSAENTSKEKSKADDDVVDADFEEVKDDK) is disordered. Positions 612-621 (TSKEKSKADD) are enriched in basic and acidic residues. The segment covering 622–635 (DVVDADFEEVKDDK) has biased composition (acidic residues).

Belongs to the heat shock protein 70 family.

Acts as a chaperone. The chain is Chaperone protein DnaK from Ruthia magnifica subsp. Calyptogena magnifica.